Reading from the N-terminus, the 361-residue chain is tRNA-specific 2-thiouridylase MnmA (361 aa).

ATP is bound by residues 6–13 and I32; that span reads LVSGGVDS. Residues 93-95 form an interaction with target base in tRNA region; it reads NPD. The Nucleophile role is filled by C98. C98 and C193 form a disulfide bridge. ATP is bound at residue G121. Residues 143-145 form an interaction with tRNA region; that stretch reads KDQ. The active-site Cysteine persulfide intermediate is C193.

This sequence belongs to the MnmA/TRMU family.

Its subcellular location is the cytoplasm. The enzyme catalyses S-sulfanyl-L-cysteinyl-[protein] + uridine(34) in tRNA + AH2 + ATP = 2-thiouridine(34) in tRNA + L-cysteinyl-[protein] + A + AMP + diphosphate + H(+). Catalyzes the 2-thiolation of uridine at the wobble position (U34) of tRNA, leading to the formation of s(2)U34. The sequence is that of tRNA-specific 2-thiouridylase MnmA from Porphyromonas gingivalis (strain ATCC BAA-308 / W83).